The chain runs to 801 residues: Probable methionine--tRNA ligase (801 aa).

The short motif at 25-35 (PYVNNVPHLGN) is the 'HIGH' region element. The short motif at 347-351 (KFSKS) is the 'KMSKS' region element. Lys350 contributes to the ATP binding site. The disordered stretch occupies residues 606 to 633 (DKLKGTKLSDGGQKKEQKKQSGGSKSKN). Positions 639 to 742 (TVAKLDIRVG…ESAAVGERVT (104 aa)) constitute a tRNA-binding domain.

The protein belongs to the class-I aminoacyl-tRNA synthetase family.

It is found in the cytoplasm. It catalyses the reaction tRNA(Met) + L-methionine + ATP = L-methionyl-tRNA(Met) + AMP + diphosphate. This chain is Probable methionine--tRNA ligase, found in Oryza sativa subsp. japonica (Rice).